Here is a 123-residue protein sequence, read N- to C-terminus: UPF0738 protein BALH_1059 (123 aa).

It belongs to the UPF0738 family.

In Bacillus thuringiensis (strain Al Hakam), this protein is UPF0738 protein BALH_1059.